The sequence spans 379 residues: Alcohol dehydrogenase 2 (379 aa).

Zn(2+) contacts are provided by Cys-47, Thr-49, His-69, Cys-99, Cys-102, Cys-105, Cys-113, and Cys-177. An alcohol is bound by residues Thr-49 and His-69. Residue Thr-49 coordinates NAD(+). Residues 202-207 (GLGAVG), Asp-226, Lys-231, Thr-272, Val-295, 295-297 (VGV), Phe-322, and Arg-372 each bind NAD(+).

It belongs to the zinc-containing alcohol dehydrogenase family. Homodimer. Zn(2+) serves as cofactor.

Its subcellular location is the cytoplasm. The enzyme catalyses a primary alcohol + NAD(+) = an aldehyde + NADH + H(+). It carries out the reaction a secondary alcohol + NAD(+) = a ketone + NADH + H(+). This Oryza sativa subsp. indica (Rice) protein is Alcohol dehydrogenase 2 (ADH2).